We begin with the raw amino-acid sequence, 617 residues long: Vacuolar protein sorting-associated protein 33B (617 aa).

A2 is subject to N-acetylalanine.

This sequence belongs to the STXBP/unc-18/SEC1 family. In terms of assembly, interacts with RAB11A and VIPAS39. Interacts with RAB25. Associates with adapter protein complex 3 (AP-3), clathrin:AP-3 and clathrin:HGS complexes. As to quaternary structure, (Microbial infection) Interacts with M.tuberculosis PtpA. In terms of processing, phosphorylated on tyrosine residues. (Microbial infection) Dephosphorylated by M.tuberculosis PtpA, which induces the reduction of host phagolysosome fusion in M.tuberculosis-infected macrophages. Ubiquitous; highly expressed in testis and low expression in the lung.

It is found in the late endosome membrane. It localises to the lysosome membrane. The protein localises to the early endosome. Its subcellular location is the cytoplasmic vesicle. The protein resides in the clathrin-coated vesicle. It is found in the recycling endosome. In terms of biological role, may play a role in vesicle-mediated protein trafficking to lysosomal compartments and in membrane docking/fusion reactions of late endosomes/lysosomes. Required for proper trafficking and targeting of the collagen-modifying enzyme lysyl hydroxylase 3 (LH3) to intracellular collagen. Mediates phagolysosomal fusion in macrophages. Proposed to be involved in endosomal maturation implicating VIPAS39. In epithelial cells, the VPS33B:VIPAS39 complex may play a role in the apical recycling pathway and in the maintenance of the apical-basolateral polarity. Seems to be involved in the sorting of specific cargos from the trans-Golgi network to alpha-granule-destined multivesicular bodies (MVBs) promoting MVBs maturation in megakaryocytes. The polypeptide is Vacuolar protein sorting-associated protein 33B (VPS33B) (Homo sapiens (Human)).